The chain runs to 934 residues: Rab GTPase-activating protein tbc-11 (934 aa).

In terms of domain architecture, PID spans 16–134 (VQYLGCSQLV…SKAETAAKAL (119 aa)). Residues 337–383 (FISLESDSDRKRSKQNLGKSPSRMPTQLLHPTGDDESDCDEPLLSGS) are disordered. A compositionally biased stretch (polar residues) spans 351–361 (QNLGKSPSRMP). One can recognise a Rab-GAP TBC domain in the interval 422 to 612 (GIPDKLRGRV…FILDLFLSQG (191 aa)). Coiled coils occupy residues 727–800 (KIEL…YKKL) and 861–895 (LEER…LTHQ).

In terms of biological role, rab GTPase activating protein for the small GTPases rab-6.1 and rab-6.2. Probably acts through rab-6.1 and rab-6.2 to play a role in microRNA-mediated gene silencing in different tissue types. Required for seam cell division and alae formation. This is Rab GTPase-activating protein tbc-11 from Caenorhabditis elegans.